A 488-amino-acid chain; its full sequence is ATP synthase subunit beta, chloroplastic (488 aa).

Residue 170-177 (GGAGVGKT) participates in ATP binding.

This sequence belongs to the ATPase alpha/beta chains family. F-type ATPases have 2 components, CF(1) - the catalytic core - and CF(0) - the membrane proton channel. CF(1) has five subunits: alpha(3), beta(3), gamma(1), delta(1), epsilon(1). CF(0) has four main subunits: a(1), b(1), b'(1) and c(9-12).

It localises to the plastid. The protein resides in the chloroplast thylakoid membrane. The catalysed reaction is ATP + H2O + 4 H(+)(in) = ADP + phosphate + 5 H(+)(out). Functionally, produces ATP from ADP in the presence of a proton gradient across the membrane. The catalytic sites are hosted primarily by the beta subunits. In Picea abies (Norway spruce), this protein is ATP synthase subunit beta, chloroplastic.